Here is a 137-residue protein sequence, read N- to C-terminus: Maltose regulon regulatory protein MalI (137 aa).

The HTH lacI-type domain occupies 6 to 60; the sequence is VTITEVAKHAGVSVTTVSMVLGNKGRISPDTIEKVNASVEALGYIRNRAAANLRS. A DNA-binding region (H-T-H motif) is located at residues 8-27; that stretch reads ITEVAKHAGVSVTTVSMVLG.

Its function is as follows. Repressor for the malX and malY genes. This is Maltose regulon regulatory protein MalI (malI) from Vibrio furnissii.